Here is a 211-residue protein sequence, read N- to C-terminus: Thiamine-phosphate synthase (211 aa).

Residues 37–41 (QLRIK) and N69 each bind 4-amino-2-methyl-5-(diphosphooxymethyl)pyrimidine. Residues D70 and D89 each contribute to the Mg(2+) site. Position 108 (S108) interacts with 4-amino-2-methyl-5-(diphosphooxymethyl)pyrimidine. 134–136 (TQT) is a 2-[(2R,5Z)-2-carboxy-4-methylthiazol-5(2H)-ylidene]ethyl phosphate binding site. 4-amino-2-methyl-5-(diphosphooxymethyl)pyrimidine is bound at residue K137. 2-[(2R,5Z)-2-carboxy-4-methylthiazol-5(2H)-ylidene]ethyl phosphate contacts are provided by residues G166 and 186-187 (VS).

This sequence belongs to the thiamine-phosphate synthase family. Mg(2+) is required as a cofactor.

It catalyses the reaction 2-[(2R,5Z)-2-carboxy-4-methylthiazol-5(2H)-ylidene]ethyl phosphate + 4-amino-2-methyl-5-(diphosphooxymethyl)pyrimidine + 2 H(+) = thiamine phosphate + CO2 + diphosphate. The enzyme catalyses 2-(2-carboxy-4-methylthiazol-5-yl)ethyl phosphate + 4-amino-2-methyl-5-(diphosphooxymethyl)pyrimidine + 2 H(+) = thiamine phosphate + CO2 + diphosphate. The catalysed reaction is 4-methyl-5-(2-phosphooxyethyl)-thiazole + 4-amino-2-methyl-5-(diphosphooxymethyl)pyrimidine + H(+) = thiamine phosphate + diphosphate. It participates in cofactor biosynthesis; thiamine diphosphate biosynthesis; thiamine phosphate from 4-amino-2-methyl-5-diphosphomethylpyrimidine and 4-methyl-5-(2-phosphoethyl)-thiazole: step 1/1. In terms of biological role, condenses 4-methyl-5-(beta-hydroxyethyl)thiazole monophosphate (THZ-P) and 2-methyl-4-amino-5-hydroxymethyl pyrimidine pyrophosphate (HMP-PP) to form thiamine monophosphate (TMP). This Salmonella dublin (strain CT_02021853) protein is Thiamine-phosphate synthase.